The sequence spans 114 residues: MGWKMASPTDDLEASLLSFEKLDRASPDLWPEQLPGVAEFAASFKSPITSSPPKWMAEIERDDIDMLKELGSLTTANLMEKVRGLQNLAYQLGLDESREMTRGKFLNILEKPKK.

2 positions are modified to phosphoserine: serine 26 and serine 51.

Belongs to the lin-52 family. Component of the DREAM complex (also named LINC complex) at least composed of E2F4, E2F5, LIN9, LIN37, LIN52, LIN54, MYBL1, MYBL2, RBL1, RBL2, RBBP4, TFDP1 and TFDP2. The complex exists in quiescent cells where it represses cell cycle-dependent genes. It dissociates in S phase when LIN9, LIN37, LIN52 and LIN54 form a subcomplex that binds to MYBL2.

The polypeptide is Protein lin-52 homolog (LIN52) (Pongo abelii (Sumatran orangutan)).